We begin with the raw amino-acid sequence, 389 residues long: Pyruvate synthase subunit PorA (389 aa).

In terms of assembly, heterotetramer of one alpha, one beta, one delta and one gamma chain.

The enzyme catalyses 2 oxidized [2Fe-2S]-[ferredoxin] + pyruvate + CoA = 2 reduced [2Fe-2S]-[ferredoxin] + acetyl-CoA + CO2 + H(+). The polypeptide is Pyruvate synthase subunit PorA (porA) (Methanocaldococcus jannaschii (strain ATCC 43067 / DSM 2661 / JAL-1 / JCM 10045 / NBRC 100440) (Methanococcus jannaschii)).